A 527-amino-acid polypeptide reads, in one-letter code: MLKNILLWSLQLSLLGMSLGGNVLIWPMEGSHWLNVKIIIDELLRKEHNVTVLVASGALFITPSVSPSLTFEIYPVPFGKEKIESVIKDFVLTWLENRPSPSTIWTFYKEMAKVIEEFHLVSRGICDGVLKNEKLMTKLQRGKFEVLLSDPVFPCGDIVALKLGIPFIYSLRFSPASTVEKHCGKVPFPPSYVPAILSELTDQMSFADRVRNFISYRMQDYMFETLWKQWDSYYSKALGRPTTLCETMGKAEIWLMRTYWDFEFPRPYLPNFEFVGGLHCKPAKPLPKEMEEFVQTSGEHGVVVFSLGSMVKNLTEEKANLIASALAQIPQKVLWRYKGKIPATLGSNTRLFDWIPQNDLLGHPKTRAFITHGGTNGIYEAIYHGIPMVGVPMFADQPDNIAHMKAKGAAVEVNMNTMTSADLLSAVRAVINEPFYKENAMRLSRIHHDQPVKPLDRAVFWIEFVMRHKGAKHLRVAAHDLSWFQYHSLDVIGFLLACMASAILLVIKCCLFVFQKIGKTXKKNKRD.

The first 20 residues, 1–20 (MLKNILLWSLQLSLLGMSLG), serve as a signal peptide directing secretion. Residues 21–490 (GNVLIWPMEG…LSWFQYHSLD (470 aa)) are Extracellular-facing. N-linked (GlcNAc...) asparagine glycosylation occurs at N49. K134 bears the N6-succinyllysine mark. A glycan (N-linked (GlcNAc...) asparagine) is linked at N313. The helical transmembrane segment at 491 to 507 (VIGFLLACMASAILLVI) threads the bilayer. Topologically, residues 508–527 (KCCLFVFQKIGKTXKKNKRD) are cytoplasmic.

Belongs to the UDP-glycosyltransferase family. In terms of tissue distribution, olfactory epithelium. Mainly found in the sustentacular cells and to a lesser extent in Bowman's gland cells. Also expressed in the olfactory sensory neuron nuclei. Neuronal localization within the olfactory bulb is mainly found in the deeper granular cells.

The protein localises to the membrane. The enzyme catalyses glucuronate acceptor + UDP-alpha-D-glucuronate = acceptor beta-D-glucuronoside + UDP + H(+). It carries out the reaction 16beta,17beta-estriol + UDP-alpha-D-glucuronate = 16beta,17beta-estriol 16-O-(beta-D-glucuronate) + UDP + H(+). It catalyses the reaction 16alpha,17alpha-estriol + UDP-alpha-D-glucuronate = 16alpha,17alpha-estriol 16-O-(beta-D-glucuronate) + UDP + H(+). The catalysed reaction is 17alpha-estradiol + UDP-alpha-D-glucuronate = 17alpha-estradiol 17-O-(beta-D-glucuronate) + UDP + H(+). The enzyme catalyses 17alpha-estradiol + UDP-alpha-D-glucuronate = 17alpha-estradiol 3-O-(beta-D-glucuronate) + UDP + H(+). It carries out the reaction 17beta-estradiol + UDP-alpha-D-glucuronate = 17beta-estradiol 3-O-(beta-D-glucuronate) + UDP + H(+). It catalyses the reaction 17beta-estradiol + UDP-alpha-D-glucuronate = 17beta-estradiol 17-O-(beta-D-glucuronate) + UDP + H(+). The catalysed reaction is testosterone + UDP-alpha-D-glucuronate = testosterone 17-O-(beta-D-glucuronate) + UDP + H(+). The enzyme catalyses epitestosterone + UDP-alpha-D-glucuronate = epitestosterone 17-O-(beta-D-glucuronate) + UDP + H(+). It carries out the reaction lithocholate + UDP-alpha-D-glucuronate = lithocholoyl-3-O-(beta-D-glucuronate) + UDP + H(+). It catalyses the reaction lithocholate + UDP-alpha-D-glucuronate = lithocholoyl-24-O-(beta-D-glucuronate) + UDP. The catalysed reaction is deoxycholate + UDP-alpha-D-glucuronate = deoxycholoyl-24-O-(beta-D-glucuronate) + UDP. The enzyme catalyses hyodeoxycholate + UDP-alpha-D-glucuronate = hyodeoxycholate 6-O-(beta-D-glucuronate) + UDP + H(+). It carries out the reaction hyocholate + UDP-alpha-D-glucuronate = hyocholoyl-24-O-(beta-D-glucuronate) + UDP. Its function is as follows. UDP-glucuronosyltransferase (UGT) that catalyzes phase II biotransformation reactions in which lipophilic substrates are conjugated with glucuronic acid to increase the metabolite's water solubility, thereby facilitating excretion into either the urine or bile. Essential for the elimination and detoxification of drugs, xenobiotics and endogenous compounds. Catalyzes the glucuronidation of endogenous steroid hormones such as androgens (testosterones) and estrogens (estradiol and estriol). Contributes to bile acid (BA) detoxification by catalyzing the glucuronidation of BA substrates, which are natural detergents for dietary lipids absorption. Shows a high affinity to aliphatic odorants such as citronellol as well as olfactory tissue specificity, and therefore may be involved in olfaction. This Rattus norvegicus (Rat) protein is UDP-glucuronosyltransferase 2A1.